The chain runs to 169 residues: Putative hydrogenase maturation protease MJ0631 (169 aa).

This sequence belongs to the peptidase A31 family.

This chain is Putative hydrogenase maturation protease MJ0631, found in Methanocaldococcus jannaschii (strain ATCC 43067 / DSM 2661 / JAL-1 / JCM 10045 / NBRC 100440) (Methanococcus jannaschii).